The primary structure comprises 210 residues: Fibrillarin-like rRNA/tRNA 2'-O-methyltransferase (210 aa).

Residues 70–71, 88–89, 113–114, and 133–136 contribute to the S-adenosyl-L-methionine site; these read TT, EY, DA, and DIAQ.

It belongs to the methyltransferase superfamily. Fibrillarin family. In terms of assembly, interacts with nop5. Component of box C/D small ribonucleoprotein (sRNP) particles that contain rpl7ae, FlpA and nop5, plus a guide RNA.

In terms of biological role, involved in pre-rRNA and tRNA processing. Utilizes the methyl donor S-adenosyl-L-methionine to catalyze the site-specific 2'-hydroxyl methylation of ribose moieties in rRNA and tRNA. Site specificity is provided by a guide RNA that base pairs with the substrate. Methylation occurs at a characteristic distance from the sequence involved in base pairing with the guide RNA. The chain is Fibrillarin-like rRNA/tRNA 2'-O-methyltransferase from Archaeoglobus fulgidus (strain ATCC 49558 / DSM 4304 / JCM 9628 / NBRC 100126 / VC-16).